Reading from the N-terminus, the 344-residue chain is Phosphoribosylformylglycinamidine cyclo-ligase (344 aa).

Belongs to the AIR synthase family.

The protein resides in the cytoplasm. The enzyme catalyses 2-formamido-N(1)-(5-O-phospho-beta-D-ribosyl)acetamidine + ATP = 5-amino-1-(5-phospho-beta-D-ribosyl)imidazole + ADP + phosphate + H(+). It participates in purine metabolism; IMP biosynthesis via de novo pathway; 5-amino-1-(5-phospho-D-ribosyl)imidazole from N(2)-formyl-N(1)-(5-phospho-D-ribosyl)glycinamide: step 2/2. The chain is Phosphoribosylformylglycinamidine cyclo-ligase from Haemophilus influenzae (strain 86-028NP).